A 356-amino-acid chain; its full sequence is MRKKIVLTGGGTAGHVMVNVALIPKLKEQGWDIVYIGSHEGIEREIIGRIDGVPYYSVSTGKLRRYFDWKNFKDPFNVLKGVWQAYRLIQKEKPDIVFSKGGFVSVPVILGAWLNGVPSVIHESDLTPGLANKIAMPFATKICLTFPETKQHVNTDKAVYVGAVVREELKHGSAEQGRKLCQFDGQKPVLLAMGGSLGSKKINDALRASLPVLLSEFDIVHICGKGNVDTSLVGQKGYKQFEYVNEELPDLLALSDIVVSRAGANAIFELLALRKPMLLIPLSKAASRGDQILNARSFEKAGYAEVLMEEEVTNESLPAAIHRLYENKDRYKKNMEKSGSSDPLQTLLALIQNTAR.

UDP-N-acetyl-alpha-D-glucosamine contacts are provided by residues 12–14, R166, S196, and Q291; that span reads TAG.

This sequence belongs to the glycosyltransferase 28 family. MurG subfamily.

The protein localises to the cell membrane. The enzyme catalyses di-trans,octa-cis-undecaprenyl diphospho-N-acetyl-alpha-D-muramoyl-L-alanyl-D-glutamyl-meso-2,6-diaminopimeloyl-D-alanyl-D-alanine + UDP-N-acetyl-alpha-D-glucosamine = di-trans,octa-cis-undecaprenyl diphospho-[N-acetyl-alpha-D-glucosaminyl-(1-&gt;4)]-N-acetyl-alpha-D-muramoyl-L-alanyl-D-glutamyl-meso-2,6-diaminopimeloyl-D-alanyl-D-alanine + UDP + H(+). It participates in cell wall biogenesis; peptidoglycan biosynthesis. Functionally, cell wall formation. Catalyzes the transfer of a GlcNAc subunit on undecaprenyl-pyrophosphoryl-MurNAc-pentapeptide (lipid intermediate I) to form undecaprenyl-pyrophosphoryl-MurNAc-(pentapeptide)GlcNAc (lipid intermediate II). The polypeptide is UDP-N-acetylglucosamine--N-acetylmuramyl-(pentapeptide) pyrophosphoryl-undecaprenol N-acetylglucosamine transferase (Geobacillus thermodenitrificans (strain NG80-2)).